A 432-amino-acid polypeptide reads, in one-letter code: 3-phosphoshikimate 1-carboxyvinyltransferase (432 aa).

Positions 23, 24, and 28 each coordinate 3-phosphoshikimate. Position 23 (lysine 23) interacts with phosphoenolpyruvate. The phosphoenolpyruvate site is built by glycine 95 and arginine 123. Residues serine 167, glutamine 169, aspartate 317, and lysine 344 each coordinate 3-phosphoshikimate. Glutamine 169 serves as a coordination point for phosphoenolpyruvate. Aspartate 317 functions as the Proton acceptor in the catalytic mechanism. The phosphoenolpyruvate site is built by arginine 348 and arginine 390.

The protein belongs to the EPSP synthase family. In terms of assembly, monomer.

The protein resides in the cytoplasm. The enzyme catalyses 3-phosphoshikimate + phosphoenolpyruvate = 5-O-(1-carboxyvinyl)-3-phosphoshikimate + phosphate. It functions in the pathway metabolic intermediate biosynthesis; chorismate biosynthesis; chorismate from D-erythrose 4-phosphate and phosphoenolpyruvate: step 6/7. Its function is as follows. Catalyzes the transfer of the enolpyruvyl moiety of phosphoenolpyruvate (PEP) to the 5-hydroxyl of shikimate-3-phosphate (S3P) to produce enolpyruvyl shikimate-3-phosphate and inorganic phosphate. The protein is 3-phosphoshikimate 1-carboxyvinyltransferase of Staphylococcus aureus (strain JH9).